Consider the following 136-residue polypeptide: Photosystem II extrinsic protein U (136 aa).

The first 28 residues, 1–28 (MKQLAQRLFSLALVLALVLGISVQSAQA), serve as a signal peptide directing secretion.

It belongs to the PsbU family. As to quaternary structure, PSII is composed of 1 copy each of membrane proteins PsbA, PsbB, PsbC, PsbD, PsbE, PsbF, PsbH, PsbI, PsbJ, PsbK, PsbL, PsbM, PsbT, PsbX, PsbY, PsbZ, Psb30/Ycf12, peripheral proteins PsbO, CyanoQ (PsbQ), PsbU, PsbV and a large number of cofactors. It forms dimeric complexes.

Its subcellular location is the cellular thylakoid membrane. One of the extrinsic, lumenal subunits of photosystem II (PSII). PSII is a light-driven water plastoquinone oxidoreductase, using light energy to abstract electrons from H(2)O, generating a proton gradient subsequently used for ATP formation. The extrinsic proteins stabilize the structure of photosystem II oxygen-evolving complex (OEC), the ion environment of oxygen evolution and protect the OEC against heat-induced inactivation. This is Photosystem II extrinsic protein U from Synechococcus elongatus (strain ATCC 33912 / PCC 7942 / FACHB-805) (Anacystis nidulans R2).